Consider the following 362-residue polypeptide: sn-glycerol-3-phosphate import ATP-binding protein UgpC (362 aa).

The ABC transporter domain occupies 4-235 (LSFRNVKKTY…PASTFVAGFI (232 aa)). 37–44 (GPSGCGKS) contacts ATP.

Belongs to the ABC transporter superfamily. sn-glycerol-3-phosphate importer (TC 3.A.1.1.3) family. The complex is composed of two ATP-binding proteins (UgpC), two transmembrane proteins (UgpA and UgpE) and a solute-binding protein (UgpB).

Its subcellular location is the cell inner membrane. It carries out the reaction sn-glycerol 3-phosphate(out) + ATP + H2O = sn-glycerol 3-phosphate(in) + ADP + phosphate + H(+). Functionally, part of the ABC transporter complex UgpBAEC involved in sn-glycerol-3-phosphate (G3P) import. Responsible for energy coupling to the transport system. This chain is sn-glycerol-3-phosphate import ATP-binding protein UgpC, found in Bordetella parapertussis (strain 12822 / ATCC BAA-587 / NCTC 13253).